We begin with the raw amino-acid sequence, 190 residues long: Recombination protein RecR (190 aa).

The segment at Cys-58–Cys-73 adopts a C4-type zinc-finger fold. The 87-residue stretch at Asn-81–Pro-167 folds into the Toprim domain.

This sequence belongs to the RecR family.

May play a role in DNA repair. It seems to be involved in an RecBC-independent recombinational process of DNA repair. It may act with RecF and RecO. This is Recombination protein RecR from Campylobacter jejuni subsp. jejuni serotype O:6 (strain 81116 / NCTC 11828).